The following is a 174-amino-acid chain: MPAQRKLGRPTDQRKAVLKSLVTALFQNGKIETTEAKAKEVKNIAEKLIAIAVKECDNFTSKQVKVSAAKLDSKGNKITNTKKSKNGNEYLVVEREIKTDMQRVDNPSRLHARRKVMSWLYRVKDSEGNTINLANKLFDEIAPKYRDVQGGYTRMYRIGPRKGDAAEMVILQLV.

The protein belongs to the bacterial ribosomal protein bL17 family. As to quaternary structure, part of the 50S ribosomal subunit. Contacts protein L32.

The protein is Large ribosomal subunit protein bL17 of Acetivibrio thermocellus (strain ATCC 27405 / DSM 1237 / JCM 9322 / NBRC 103400 / NCIMB 10682 / NRRL B-4536 / VPI 7372) (Clostridium thermocellum).